Here is a 352-residue protein sequence, read N- to C-terminus: Isopentenyl-diphosphate delta-isomerase (352 aa).

Residue 6 to 7 (RK) coordinates substrate. FMN is bound by residues 63–65 (AMT), Ser-93, and Asn-122. 93 to 95 (SQR) is a binding site for substrate. Substrate is bound at residue Gln-160. Glu-161 serves as a coordination point for Mg(2+). FMN contacts are provided by residues Lys-192, Thr-221, 271–273 (GIR), and 292–293 (SQ).

It belongs to the IPP isomerase type 2 family. Homooctamer. Dimer of tetramers. Requires FMN as cofactor. NADPH is required as a cofactor. The cofactor is Mg(2+).

It localises to the cytoplasm. It catalyses the reaction isopentenyl diphosphate = dimethylallyl diphosphate. Its function is as follows. Involved in the biosynthesis of isoprenoids. Catalyzes the 1,3-allylic rearrangement of the homoallylic substrate isopentenyl (IPP) to its allylic isomer, dimethylallyl diphosphate (DMAPP). This is Isopentenyl-diphosphate delta-isomerase from Pyrobaculum aerophilum (strain ATCC 51768 / DSM 7523 / JCM 9630 / CIP 104966 / NBRC 100827 / IM2).